The chain runs to 474 residues: tRNA-2-methylthio-N(6)-dimethylallyladenosine synthase (474 aa).

The MTTase N-terminal domain occupies 3–120; it reads KKLHIKTWGC…LPDMIEQVRR (118 aa). Cys12, Cys49, Cys83, Cys157, Cys161, and Cys164 together coordinate [4Fe-4S] cluster. Positions 143–375 constitute a Radical SAM core domain; that stretch reads RAEGPTAFVS…QDRITQQAMR (233 aa). In terms of domain architecture, TRAM spans 378–441; it reads RHMMGTVQRI…TNSLRGKFIR (64 aa).

Belongs to the methylthiotransferase family. MiaB subfamily. Monomer. It depends on [4Fe-4S] cluster as a cofactor.

The protein localises to the cytoplasm. The catalysed reaction is N(6)-dimethylallyladenosine(37) in tRNA + (sulfur carrier)-SH + AH2 + 2 S-adenosyl-L-methionine = 2-methylsulfanyl-N(6)-dimethylallyladenosine(37) in tRNA + (sulfur carrier)-H + 5'-deoxyadenosine + L-methionine + A + S-adenosyl-L-homocysteine + 2 H(+). Functionally, catalyzes the methylthiolation of N6-(dimethylallyl)adenosine (i(6)A), leading to the formation of 2-methylthio-N6-(dimethylallyl)adenosine (ms(2)i(6)A) at position 37 in tRNAs that read codons beginning with uridine. This is tRNA-2-methylthio-N(6)-dimethylallyladenosine synthase from Shewanella sp. (strain MR-4).